The chain runs to 837 residues: MAKAAASSSLEDLDLSGEEVQRLTSAFQDPEFRRMFSQYAEELTDPENRRRYEAEITALERERGVEVRFVHPEPGHVLRTSLDGARRCFVNVCSNALVGAPSSRPGSGGDRGAAPGSHWSLPYSLAPGREYAGRSSSRYMVYDVVFHPDALALARRHEGFRQMLDATALEAVEKQFGVKLDRRNAKTLKAKYKGTPEAAVLRTPLPGVIPARPDGEPKGPLPDFPYPYQYPAAPGPRAPSPPEAALQPAPTEPRYSVVQRHHVDLQDYRCSRDSAPSPVPHELVITIELPLLRSAEQAALEVTRKLLCLDSRKPDYRLRLSLPYPVDDGRGKAQFNKARRQLVVTLPVVLPAARREPAVAVAAAAPEESADRSGTDGQACASAREGEAGPARSRAEDGGHDTCVAGAAGSGVTTLGDPEVAPPPAAAGEERVPKPGEQDLSRHAGSPPGSVEEPSPGGENSPGGGGSPCLSSRSLAWGSSAGRESARGDSSVETREESEGTGGQRSACAMGGPGTKSGEPLCPPLLCNQDKETLTLLIQVPRIQPQSLQGDLNPLWYKLRFSAQDLVYSFFLQFAPENKLSTTEPVISISSNNAVIELAKSPESHGHWREWYYGVNNDSLEERLFVNEENVNEFLEEVLSSPFKQSMSLTPPLIEVLQVTDNKIQINAKLQECSNSDQLQGKEERVNEESHLTEKEYIEHCNTPTTDSDSSIAVKALQIDSFGLVTCFQQESLDVSQMILGKSQQPESKMQSEFIKEKSATCSNEEKDNLNESVITEEKETDGDHLSSLLNKTTVHNIPGFDSIKETNMQDGSVQVIKDHVTNCAFSFQNSLLYDLD.

Disordered stretches follow at residues 100-119, 205-224, 230-249, and 363-515; these read APSSRPGSGGDRGAAPGSHW, LPGVIPARPDGEPKGPLPDF, YPAAPGPRAPSPPEAALQPA, and AAAP…GPGT. Residues 233–242 show a composition bias toward pro residues; sequence APGPRAPSPP. A compositionally biased stretch (basic and acidic residues) spans 428–442; it reads GEERVPKPGEQDLSR. The segment covering 445–459 has biased composition (low complexity); the sequence is GSPPGSVEEPSPGGE. Phosphoserine occurs at positions 461 and 467. The segment covering 484-498 has biased composition (basic and acidic residues); it reads ESARGDSSVETREES. 3 positions are modified to phosphoserine: serine 640, serine 641, and serine 773.

Belongs to the PIH1 family. Kintoun subfamily. In terms of assembly, interacts with CFAP300. Interacts with DNAAF4. Interacts with DNAAF6/PIH1D3. Interacts with DNAI2 and HSPA1A.

The protein localises to the cytoplasm. It is found in the dynein axonemal particle. Its function is as follows. Required for cytoplasmic pre-assembly of axonemal dyneins, thereby playing a central role in motility in cilia and flagella. Involved in pre-assembly of dynein arm complexes in the cytoplasm before intraflagellar transport loads them for the ciliary compartment. The protein is Protein kintoun of Homo sapiens (Human).